The sequence spans 198 residues: NAD(P)H dehydrogenase (quinone) (198 aa).

Residues isoleucine 6–alanine 190 enclose the Flavodoxin-like domain. FMN-binding positions include serine 12–threonine 17, threonine 79–phenylalanine 81, serine 114–glycine 120, and histidine 135.

The protein belongs to the WrbA family. Homodimer. Requires FMN as cofactor.

It carries out the reaction a quinone + NADH + H(+) = a quinol + NAD(+). The enzyme catalyses a quinone + NADPH + H(+) = a quinol + NADP(+). The polypeptide is NAD(P)H dehydrogenase (quinone) (Pseudomonas aeruginosa (strain ATCC 15692 / DSM 22644 / CIP 104116 / JCM 14847 / LMG 12228 / 1C / PRS 101 / PAO1)).